Here is a 411-residue protein sequence, read N- to C-terminus: LL-diaminopimelate aminotransferase (411 aa).

2 residues coordinate substrate: tyrosine 15 and glycine 42. Pyridoxal 5'-phosphate is bound by residues tyrosine 72, alanine 108–lysine 109, tyrosine 132, asparagine 187, tyrosine 218, and serine 246–serine 248. Lysine 109, tyrosine 132, and asparagine 187 together coordinate substrate. Lysine 249 carries the N6-(pyridoxal phosphate)lysine modification. Pyridoxal 5'-phosphate-binding residues include arginine 257 and asparagine 292. Residues asparagine 292 and arginine 388 each coordinate substrate.

It belongs to the class-I pyridoxal-phosphate-dependent aminotransferase family. LL-diaminopimelate aminotransferase subfamily. In terms of assembly, homodimer. Requires pyridoxal 5'-phosphate as cofactor.

It carries out the reaction (2S,6S)-2,6-diaminopimelate + 2-oxoglutarate = (S)-2,3,4,5-tetrahydrodipicolinate + L-glutamate + H2O + H(+). Its pathway is amino-acid biosynthesis; L-lysine biosynthesis via DAP pathway; LL-2,6-diaminopimelate from (S)-tetrahydrodipicolinate (aminotransferase route): step 1/1. In terms of biological role, involved in the synthesis of meso-diaminopimelate (m-DAP or DL-DAP), required for both lysine and peptidoglycan biosynthesis. Catalyzes the direct conversion of tetrahydrodipicolinate to LL-diaminopimelate. This Rippkaea orientalis (strain PCC 8801 / RF-1) (Cyanothece sp. (strain PCC 8801)) protein is LL-diaminopimelate aminotransferase.